Here is a 326-residue protein sequence, read N- to C-terminus: Phosphatidylinositol:ceramide inositolphosphotransferase (326 aa).

6 consecutive transmembrane segments (helical) span residues 33–53, 82–102, 115–135, 169–189, 199–219, and 222–242; these read LLLAGLVFQYIHGLAARGVHY, SVFTFIFISFLLWSFHPFIYH, VLAFLVASQFLRIITFYSTQL, VLFGCGDLIFSSHMIFTLVFV, RLIKILAWLMAIIQSLLIIAS, and HYSVDVVVAWYTVNLVVFFID. His181 is an active-site residue. Residues His222 and Asp226 contribute to the active site. A disordered region spans residues 306-326; it reads MNGKHGEDINHTLSDATPNGT. The segment covering 316-326 has biased composition (polar residues); it reads HTLSDATPNGT.

The protein belongs to the sphingomyelin synthase family.

The protein localises to the golgi apparatus. It is found in the trans-Golgi network membrane. Catalyzes the transfer of the phosphorylinositol group from phosphatidylinositol (PI) to phytoceramide, an essential step in sphingolipid biosynthesis. May play an important role in modulating plant programmed cell death (PCD) associated with defense (e.g. toward Golovinomyces cichoracearum) by promoting sphingolipid metabolism and regulating ceramide accumulation. The polypeptide is Phosphatidylinositol:ceramide inositolphosphotransferase (ERH1) (Oryza sativa subsp. indica (Rice)).